The sequence spans 89 residues: YcgL domain-containing protein Asuc_1390 (89 aa).

Residues 1–85 (MLCAIYKSKK…KDDWLFTIEK (85 aa)) form the YcgL domain.

This is YcgL domain-containing protein Asuc_1390 from Actinobacillus succinogenes (strain ATCC 55618 / DSM 22257 / CCUG 43843 / 130Z).